The chain runs to 490 residues: Betaine aldehyde dehydrogenase (490 aa).

Residues threonine 26, isoleucine 27, and aspartate 93 each coordinate K(+). 150-152 (GAW) is a binding site for NAD(+). Lysine 162 acts as the Charge relay system in catalysis. 176 to 179 (KPSE) contacts NAD(+). Valine 180 contributes to the K(+) binding site. 230–233 (GVAS) lines the NAD(+) pocket. Position 246 (leucine 246) interacts with K(+). Glutamate 252 (proton acceptor) is an active-site residue. The NAD(+) site is built by glycine 254, cysteine 286, and glutamate 387. The Nucleophile role is filled by cysteine 286. Cysteine 286 bears the Cysteine sulfenic acid (-SOH) mark. K(+) is bound by residues lysine 457 and glycine 460. The Charge relay system role is filled by glutamate 464.

This sequence belongs to the aldehyde dehydrogenase family. As to quaternary structure, dimer of dimers. K(+) is required as a cofactor.

The enzyme catalyses betaine aldehyde + NAD(+) + H2O = glycine betaine + NADH + 2 H(+). It participates in amine and polyamine biosynthesis; betaine biosynthesis via choline pathway; betaine from betaine aldehyde: step 1/1. Involved in the biosynthesis of the osmoprotectant glycine betaine. Catalyzes the irreversible oxidation of betaine aldehyde to the corresponding acid. This chain is Betaine aldehyde dehydrogenase, found in Escherichia coli O139:H28 (strain E24377A / ETEC).